The sequence spans 182 residues: Adenine phosphoribosyltransferase (182 aa).

It belongs to the purine/pyrimidine phosphoribosyltransferase family. In terms of assembly, homodimer.

The protein localises to the cytoplasm. It carries out the reaction AMP + diphosphate = 5-phospho-alpha-D-ribose 1-diphosphate + adenine. It participates in purine metabolism; AMP biosynthesis via salvage pathway; AMP from adenine: step 1/1. Its function is as follows. Catalyzes a salvage reaction resulting in the formation of AMP, that is energically less costly than de novo synthesis. The polypeptide is Adenine phosphoribosyltransferase (Stutzerimonas stutzeri (Pseudomonas stutzeri)).